An 84-amino-acid polypeptide reads, in one-letter code: MAHKKAGGSTRNGRDSHSKRLGVKCFGGECVSSGTIIVRQRGNTFHPGKYVGCGRDYTLFALKSGKVLFEKRGALRRKFISIVS.

Residues 1 to 20 form a disordered region; that stretch reads MAHKKAGGSTRNGRDSHSKR.

This sequence belongs to the bacterial ribosomal protein bL27 family.

In Blochmanniella pennsylvanica (strain BPEN), this protein is Large ribosomal subunit protein bL27.